Consider the following 499-residue polypeptide: Bifunctional purine biosynthesis protein PurH (499 aa).

In terms of domain architecture, MGS-like spans 1–144 (MIKRALISVF…KNFKDVVVLT (144 aa)).

Belongs to the PurH family.

It carries out the reaction (6R)-10-formyltetrahydrofolate + 5-amino-1-(5-phospho-beta-D-ribosyl)imidazole-4-carboxamide = 5-formamido-1-(5-phospho-D-ribosyl)imidazole-4-carboxamide + (6S)-5,6,7,8-tetrahydrofolate. The enzyme catalyses IMP + H2O = 5-formamido-1-(5-phospho-D-ribosyl)imidazole-4-carboxamide. The protein operates within purine metabolism; IMP biosynthesis via de novo pathway; 5-formamido-1-(5-phospho-D-ribosyl)imidazole-4-carboxamide from 5-amino-1-(5-phospho-D-ribosyl)imidazole-4-carboxamide (10-formyl THF route): step 1/1. It functions in the pathway purine metabolism; IMP biosynthesis via de novo pathway; IMP from 5-formamido-1-(5-phospho-D-ribosyl)imidazole-4-carboxamide: step 1/1. In Clostridium botulinum (strain 657 / Type Ba4), this protein is Bifunctional purine biosynthesis protein PurH.